Consider the following 90-residue polypeptide: Acylphosphatase (90 aa).

The region spanning 5–90 (SYLFNVKGKV…WQELTDFKMY (86 aa)) is the Acylphosphatase-like domain. Catalysis depends on residues Arg-20 and Asn-38.

This sequence belongs to the acylphosphatase family.

The catalysed reaction is an acyl phosphate + H2O = a carboxylate + phosphate + H(+). This chain is Acylphosphatase (acyP), found in Aliivibrio fischeri (strain ATCC 700601 / ES114) (Vibrio fischeri).